Here is a 390-residue protein sequence, read N- to C-terminus: MMNRVILFIMDSVGIGALPDAEQFGDLGANTLGNIALQENGIDLPNLQKLGLGNIDGIVGIEPVESPLGAFGKSLEVSNGKDTTTGHWEIAGIHLKEPFKTFPNGFPEDVINEIERKIGRKTLGNKAASGTVILDELGEEHMRTGSPIIYTSADSVLQIAAHEEVISLDELYKICGIAREIMMGDNAVARIIARPFIGSVGNFSRTPNRRDFSLDPSGDTVLDIAKREGFDVIAVGKIEDIFNGRGITEAVHTVDNMDGINKTIEYIEKQNKGIIFTNLVDFDSMYGHRRDPKGYKRALEDLDKRIPEILESMRDDDIIIFTADHGNDPTYKGSDHTREYIPLVIYGKKVKANTNIGIRKSFADIAATISDILEIPSTNKGESFKNSIIK.

The Mn(2+) site is built by D11, D283, H288, D324, H325, and H336.

The protein belongs to the phosphopentomutase family. Mn(2+) serves as cofactor.

Its subcellular location is the cytoplasm. It catalyses the reaction 2-deoxy-alpha-D-ribose 1-phosphate = 2-deoxy-D-ribose 5-phosphate. The catalysed reaction is alpha-D-ribose 1-phosphate = D-ribose 5-phosphate. Its pathway is carbohydrate degradation; 2-deoxy-D-ribose 1-phosphate degradation; D-glyceraldehyde 3-phosphate and acetaldehyde from 2-deoxy-alpha-D-ribose 1-phosphate: step 1/2. Its function is as follows. Isomerase that catalyzes the conversion of deoxy-ribose 1-phosphate (dRib-1-P) and ribose 1-phosphate (Rib-1-P) to deoxy-ribose 5-phosphate (dRib-5-P) and ribose 5-phosphate (Rib-5-P), respectively. The sequence is that of Phosphopentomutase from Alkaliphilus oremlandii (strain OhILAs) (Clostridium oremlandii (strain OhILAs)).